A 118-amino-acid chain; its full sequence is Telomere bouquet protein 2 (118 aa).

As to quaternary structure, interacts with bqt1. The bqt1-bqt2-sad1 complex binds rap1.

Its subcellular location is the cytoplasm. It is found in the nucleus. The protein localises to the cytoskeleton. The protein resides in the microtubule organizing center. It localises to the spindle pole body. Its subcellular location is the chromosome. It is found in the telomere. In terms of biological role, involved in chromosome segregation. During meiotic prophase, connects telomeres to the spindle pole body by forming a bridge between the telomere protein rap1 and the spindle pole body protein sad1. In Schizosaccharomyces pombe (strain 972 / ATCC 24843) (Fission yeast), this protein is Telomere bouquet protein 2 (bqt2).